A 432-amino-acid chain; its full sequence is Glutamate-1-semialdehyde 2,1-aminomutase 2 (432 aa).

Lys-268 carries the post-translational modification N6-(pyridoxal phosphate)lysine.

It belongs to the class-III pyridoxal-phosphate-dependent aminotransferase family. HemL subfamily. As to quaternary structure, homodimer. Requires pyridoxal 5'-phosphate as cofactor.

The protein resides in the cytoplasm. It carries out the reaction (S)-4-amino-5-oxopentanoate = 5-aminolevulinate. It functions in the pathway porphyrin-containing compound metabolism; protoporphyrin-IX biosynthesis; 5-aminolevulinate from L-glutamyl-tRNA(Glu): step 2/2. The chain is Glutamate-1-semialdehyde 2,1-aminomutase 2 from Listeria monocytogenes serotype 4b (strain F2365).